A 72-amino-acid chain; its full sequence is UPF0270 protein ESA_04379 (72 aa).

It belongs to the UPF0270 family.

The polypeptide is UPF0270 protein ESA_04379 (Cronobacter sakazakii (strain ATCC BAA-894) (Enterobacter sakazakii)).